The sequence spans 729 residues: Solute carrier family 15 member 2 (729 aa).

The interval 1–34 (MNPFQQNESKETLFSPVSTEETPPRLSSPAKKTP) is disordered. At 1–57 (MNPFQQNESKETLFSPVSTEETPPRLSSPAKKTPPKICGSNYPLSIAFIVVNEFCER) the chain is on the cytoplasmic side. The residue at position 9 (Ser-9) is a Phosphoserine. Thr-12 bears the Phosphothreonine mark. A Phosphoserine modification is found at Ser-28. Residues 58–78 (FSYYGMKAVLTLYFLYFLHWN) form a helical membrane-spanning segment. Residues 79–87 (EDTSTSVYH) lie on the Extracellular side of the membrane. The chain crosses the membrane as a helical span at residues 88 to 108 (AFSSLCYFTPILGAAIADSWL). Topologically, residues 109–113 (GKFKT) are cytoplasmic. Residues 114 to 134 (IIYLSLVNVLGHVIKSLSAFP) form a helical membrane-spanning segment. The Extracellular portion of the chain corresponds to 135–139 (ILGGK). A helical transmembrane segment spans residues 140 to 160 (VVHTVLSLVGLCLIALGTGGI). Residues 161-183 (KPCVAAFGGDQFEEKHAEERTRY) are Cytoplasmic-facing. Residues 184-204 (FSGFYLAINAGSLISTFITPM) traverse the membrane as a helical segment. Topologically, residues 205–217 (LRGDVQCFGEDCY) are extracellular. A helical transmembrane segment spans residues 218-238 (ALAFGVPGLLMVIALVVFAMG). The Cytoplasmic segment spans residues 239 to 295 (SKMYKKPPPEGNIVAQVVKCIWFAISNRFKNRSEDIPKRQHWLDWAAEKYPKQLIMD). A helical transmembrane segment spans residues 296 to 316 (VKTLTRVLFLYIPLPMFWALL). Topologically, residues 317–343 (DQQGSRWTLQATKMNGNLGFFVLQPDQ) are extracellular. A helical transmembrane segment spans residues 344–364 (MQVLNPLLVLIFIPLFDLVIY). The Cytoplasmic segment spans residues 365 to 380 (RLISKCGINFTSLRKM). The helical transmembrane segment at 381 to 401 (AVGMVLACLAFAAAATVEIKI) threads the bilayer. Residues 402 to 611 (NEMAPPQPGS…PANKVSIAWQ (210 aa)) lie on the Extracellular side of the membrane. The tract at residues 402–611 (NEMAPPQPGS…PANKVSIAWQ (210 aa)) is extracellular domain (ECD). 5 N-linked (GlcNAc...) asparagine glycosylation sites follow: Asn-435, Asn-472, Asn-508, Asn-528, and Asn-587. Residues 612–632 (LPQYALVTAGEVMFSVTGLEF) traverse the membrane as a helical segment. At 633–643 (SYSQAPSSMKS) the chain is on the cytoplasmic side. A helical membrane pass occupies residues 644–664 (VLQAAWLLTVAIGNIIVLVVA). Residues 665–674 (QFSGLVQWAE) are Extracellular-facing. The chain crosses the membrane as a helical span at residues 675 to 695 (FVLFSCLLLVVCLIFSIMGYY). The Cytoplasmic segment spans residues 696–729 (YIPIKSEDIQGPEDKQIPHMQGNMINLETKKTKL).

This sequence belongs to the major facilitator superfamily. Proton-dependent oligopeptide transporter (POT/PTR) (TC 2.A.17) family. Interacts (via extracellular domain region) with trypsin. Strongly expressed in kidney. Also detected in brain, lung, liver and heart.

The protein resides in the apical cell membrane. It localises to the cytoplasmic vesicle. Its subcellular location is the phagosome membrane. The protein localises to the cell membrane. It carries out the reaction a dipeptide(out) + 2 H(+)(out) = a dipeptide(in) + 2 H(+)(in). It catalyses the reaction N-acetyl-D-muramoyl-L-alanyl-D-isoglutamine(out) + 3 H(+)(out) = N-acetyl-D-muramoyl-L-alanyl-D-isoglutamine(in) + 3 H(+)(in). The enzyme catalyses glycyl-L-leucine(out) + 2 H(+)(out) = glycyl-L-leucine(in) + 2 H(+)(in). The catalysed reaction is glycyl-L-lysine(out) + 2 H(+)(out) = glycyl-L-lysine(in) + 2 H(+)(in). It carries out the reaction glycyl-L-glutamate(out) + 3 H(+)(out) = glycyl-L-glutamate(in) + 3 H(+)(in). It catalyses the reaction L-alanyl-L-alanine(out) + 2 H(+)(out) = L-alanyl-L-alanine(in) + 2 H(+)(in). The enzyme catalyses an L-amino acid tripeptide(out) + 2 H(+)(out) = an L-amino acid tripeptide(in) + 2 H(+)(in). The catalysed reaction is carnosine(out) + 2 H(+)(out) = carnosine(in) + 2 H(+)(in). In terms of biological role, proton-coupled amino-acid transporter that transports oligopeptides of 2 to 4 amino acids with a preference for dipeptides. Transports neutral and anionic dipeptides with a proton to peptide stoichiometry of 2:1 or 3:1. In kidney, involved in the absorption of circulating di- and tripeptides from the glomerular filtrate. Can also transport beta-lactam antibiotics, such as the aminocephalosporin cefadroxil, and other antiviral and anticancer drugs. Transports the dipeptide-like aminopeptidase inhibitor bestatin. Also able to transport carnosine. Involved in innate immunity by promoting the detection of microbial pathogens by NOD-like receptors (NLRs). Mediates transport of bacterial peptidoglycans across the plasma membrane or, in macrophages, the phagosome membrane: catalyzes the transport of certain bacterial peptidoglycans, such as muramyl dipeptide (MDP), the NOD2 ligand. This is Solute carrier family 15 member 2 from Oryctolagus cuniculus (Rabbit).